The primary structure comprises 394 residues: 1-deoxy-D-xylulose 5-phosphate reductoisomerase (394 aa).

Residues T12, G13, S14, I15, K39, Q40, and N126 each coordinate NADPH. K127 is a 1-deoxy-D-xylulose 5-phosphate binding site. An NADPH-binding site is contributed by E128. D152 serves as a coordination point for Mn(2+). Residues S153, E154, S183, and H206 each contribute to the 1-deoxy-D-xylulose 5-phosphate site. Mn(2+) is bound at residue E154. Residue G212 participates in NADPH binding. Positions 219, 224, 225, and 228 each coordinate 1-deoxy-D-xylulose 5-phosphate. E228 is a binding site for Mn(2+).

Belongs to the DXR family. Mg(2+) is required as a cofactor. Mn(2+) serves as cofactor.

It catalyses the reaction 2-C-methyl-D-erythritol 4-phosphate + NADP(+) = 1-deoxy-D-xylulose 5-phosphate + NADPH + H(+). The protein operates within isoprenoid biosynthesis; isopentenyl diphosphate biosynthesis via DXP pathway; isopentenyl diphosphate from 1-deoxy-D-xylulose 5-phosphate: step 1/6. In terms of biological role, catalyzes the NADPH-dependent rearrangement and reduction of 1-deoxy-D-xylulose-5-phosphate (DXP) to 2-C-methyl-D-erythritol 4-phosphate (MEP). In Neisseria meningitidis serogroup A / serotype 4A (strain DSM 15465 / Z2491), this protein is 1-deoxy-D-xylulose 5-phosphate reductoisomerase.